A 421-amino-acid polypeptide reads, in one-letter code: Fusaric acid cluster transcription factor FUB10 (421 aa).

Positions 16-47 form a DNA-binding region, zn(2)-C6 fungal-type; the sequence is CDRCRAQKLRCHRDSGHSTDACLRCLKSGIEC. Residues 50 to 92 form a disordered region; the sequence is SKARPTGRPPSRQVQPTVVVEQGDTSSSSHTTDSSPSAGGTDM. Positions 74–86 are enriched in low complexity; it reads TSSSSHTTDSSPS.

Its subcellular location is the nucleus. Transcription factor that regulates the expression of the gene cluster that mediates the biosynthesis of fusaric acid, a mycotoxin with low to moderate toxicity to animals and humans, but with high phytotoxic properties. This chain is Fusaric acid cluster transcription factor FUB10, found in Gibberella moniliformis (strain M3125 / FGSC 7600) (Maize ear and stalk rot fungus).